The following is a 365-amino-acid chain: Protein dbl-1 (365 aa).

A signal peptide spans 1–42; the sequence is MNDSVRTTTTISSTKSLVHSFQLSAILHLFLLISFTPMSAAA. Positions 43–244 are excised as a propeptide; that stretch reads DQHASHATRR…KRSAQTGNSE (202 aa). 3 N-linked (GlcNAc...) asparagine glycosylation sites follow: N110, N143, and N167. Residues 231–259 are disordered; sequence SVRRKRSAQTGNSERKNRKKGRKHHNTEA. Positions 246 to 255 are enriched in basic residues; sequence KNRKKGRKHH. Cystine bridges form between C264/C330, C293/C362, and C297/C364. N-linked (GlcNAc...) asparagine glycosylation is present at N306.

It belongs to the TGF-beta family. As to quaternary structure, homodimer; disulfide-linked. Interacts with drag-1. As to expression, expressed in embryos just prior to hatching and remains constant in most cells throughout the larval and adult stages. Expressed by AVA command interneurons.

Its subcellular location is the secreted. Ligand for the serine/threonine-protein kinase receptor type-1 sma-6 which activates a TGF-beta-like signaling pathway. Multifunctional protein that is involved in body size, male ectodermal patterning, innate immunity, lipid metabolism and neural plasticity. Dose-dependent regulator of body size, probably influencing the sizes of some or all cells rather than their number. Plays a role in patterning of male-specific genital sensilla (simple sense organs), known as rays, and mating-associated structures, spicules. Plays a protective role in response to infection by the Gram-negative bacterium S.marcescens, by activating expression of genes involved in innate immunity. Regulator of lipid homeostasis, acting non cell-autonomously in the hypodermis; partly dependent on the Insulin/IGF-1-like signaling (IIS) mediated pathway. Required for aversive olfactory learning of pathogenic bacteria in adults. Involved in gland cell morphology, possibly via activation of a Smad-independent TGF-beta signaling pathway. Required to oppose the autoregulation of expression of Runt-related transcription factor rnt-1. This chain is Protein dbl-1, found in Caenorhabditis elegans.